We begin with the raw amino-acid sequence, 233 residues long: 7-cyano-7-deazaguanine synthase (233 aa).

An ATP-binding site is contributed by 7-17 (LSGGLDSLVTS). Residues cysteine 195, cysteine 206, cysteine 209, and cysteine 212 each coordinate Zn(2+).

It belongs to the QueC family. The cofactor is Zn(2+).

The enzyme catalyses 7-carboxy-7-deazaguanine + NH4(+) + ATP = 7-cyano-7-deazaguanine + ADP + phosphate + H2O + H(+). It participates in purine metabolism; 7-cyano-7-deazaguanine biosynthesis. Catalyzes the ATP-dependent conversion of 7-carboxy-7-deazaguanine (CDG) to 7-cyano-7-deazaguanine (preQ(0)). The chain is 7-cyano-7-deazaguanine synthase from Methanococcus vannielii (strain ATCC 35089 / DSM 1224 / JCM 13029 / OCM 148 / SB).